Reading from the N-terminus, the 193-residue chain is Bifunctional protein PyrR (193 aa).

Substrate is bound by residues 57–58 (TR), Arg-98, 119–127 (DDVLYSGRS), Arg-152, and Val-176. Residues 115–127 (VILVDDVLYSGRS) carry the PRPP-binding motif.

This sequence belongs to the purine/pyrimidine phosphoribosyltransferase family. PyrR subfamily.

The catalysed reaction is UMP + diphosphate = 5-phospho-alpha-D-ribose 1-diphosphate + uracil. Its function is as follows. Regulates the transcription of the pyrimidine nucleotide (pyr) operon in response to exogenous pyrimidines. Functionally, also displays a weak uracil phosphoribosyltransferase activity which is not physiologically significant. The sequence is that of Bifunctional protein PyrR from Mycobacterium bovis (strain ATCC BAA-935 / AF2122/97).